The following is a 1297-amino-acid chain: DNA-directed RNA polymerase subunit beta' (1297 aa).

Zn(2+) is bound by residues C60, C62, C75, and C78. Mg(2+) is bound by residues D535, D537, and D539. Zn(2+)-binding residues include C883, C961, C968, and C971.

Belongs to the RNA polymerase beta' chain family. The RNAP catalytic core consists of 2 alpha, 1 beta, 1 beta' and 1 omega subunit. When a sigma factor is associated with the core the holoenzyme is formed, which can initiate transcription. It depends on Mg(2+) as a cofactor. The cofactor is Zn(2+).

It carries out the reaction RNA(n) + a ribonucleoside 5'-triphosphate = RNA(n+1) + diphosphate. In terms of biological role, DNA-dependent RNA polymerase catalyzes the transcription of DNA into RNA using the four ribonucleoside triphosphates as substrates. This is DNA-directed RNA polymerase subunit beta' from Salinispora arenicola (strain CNS-205).